The primary structure comprises 231 residues: Heptaprenylglyceryl phosphate synthase (231 aa).

Lys12 contributes to the sn-glycerol 1-phosphate binding site. The Mg(2+) site is built by Asp14 and Thr40. Sn-glycerol 1-phosphate is bound by residues 159 to 164 (YMEYSG), Gly189, and 209 to 210 (GN).

This sequence belongs to the GGGP/HepGP synthase family. Group I subfamily. As to quaternary structure, homodimer. Mg(2+) serves as cofactor.

The catalysed reaction is sn-glycerol 1-phosphate + all-trans-heptaprenyl diphosphate = 3-heptaprenyl-sn-glycero-1-phosphate + diphosphate. It functions in the pathway membrane lipid metabolism; glycerophospholipid metabolism. Its function is as follows. Prenyltransferase that catalyzes in vivo the transfer of the heptaprenyl moiety of heptaprenyl pyrophosphate (HepPP; 35 carbon atoms) to the C3 hydroxyl of sn-glycerol-1-phosphate (G1P), producing heptaprenylglyceryl phosphate (HepGP). This reaction is an ether-bond-formation step in the biosynthesis of archaea-type G1P-based membrane lipids found in Bacillales. This chain is Heptaprenylglyceryl phosphate synthase, found in Brevibacillus brevis (strain 47 / JCM 6285 / NBRC 100599).